The chain runs to 582 residues: Arginine--tRNA ligase (582 aa).

Residues 128-138 (PNLAKEMHVGH) carry the 'HIGH' region motif.

It belongs to the class-I aminoacyl-tRNA synthetase family. In terms of assembly, monomer.

The protein resides in the cytoplasm. The enzyme catalyses tRNA(Arg) + L-arginine + ATP = L-arginyl-tRNA(Arg) + AMP + diphosphate. The protein is Arginine--tRNA ligase of Colwellia psychrerythraea (strain 34H / ATCC BAA-681) (Vibrio psychroerythus).